Reading from the N-terminus, the 102-residue chain is Acid shock protein (102 aa).

The signal sequence occupies residues methionine 1–alanine 21. A compositionally biased stretch (low complexity) spans alanine 22 to lysine 41. Residues alanine 22–glutamine 58 constitute a propeptide that is removed on maturation. The segment at alanine 22–alanine 102 is disordered. Basic residues predominate over residues alanine 80–histidine 90. The span at glutamine 91–alanine 102 shows a compositional bias: low complexity.

It belongs to the Asr family. Post-translationally, proteolytic processing gives rise to the active protein.

The protein localises to the periplasm. Functionally, required for growth and/or survival at acidic conditions. The protein is Acid shock protein of Escherichia coli (strain 55989 / EAEC).